Reading from the N-terminus, the 242-residue chain is Protein GrpE (242 aa).

The span at 1–10 shows a compositional bias: polar residues; the sequence is MAGENSSTET. Residues 1 to 64 form a disordered region; the sequence is MAGENSSTET…QSTESTSKEK (64 aa). The segment covering 11–20 has biased composition (basic and acidic residues); the sequence is KNQEINEKTP. 2 stretches are compositionally biased toward polar residues: residues 21–32 and 40–59; these read EVQTFETNVEFE and DTEL…STES.

Belongs to the GrpE family. As to quaternary structure, homodimer.

It is found in the cytoplasm. In terms of biological role, participates actively in the response to hyperosmotic and heat shock by preventing the aggregation of stress-denatured proteins, in association with DnaK and GrpE. It is the nucleotide exchange factor for DnaK and may function as a thermosensor. Unfolded proteins bind initially to DnaJ; upon interaction with the DnaJ-bound protein, DnaK hydrolyzes its bound ATP, resulting in the formation of a stable complex. GrpE releases ADP from DnaK; ATP binding to DnaK triggers the release of the substrate protein, thus completing the reaction cycle. Several rounds of ATP-dependent interactions between DnaJ, DnaK and GrpE are required for fully efficient folding. This chain is Protein GrpE, found in Trichodesmium erythraeum (strain IMS101).